Consider the following 401-residue polypeptide: Patatin-like protein 4 (401 aa).

The PNPLA domain occupies 17 to 218 (LSLDGGGVRG…TANDPTLVGM (202 aa)). The GXGXXG signature appears at 21 to 26 (GGGVRG). The short motif at 60–64 (GTSTG) is the GXSXG element. The active-site Nucleophile is the serine 62. Catalysis depends on aspartate 205, which acts as the Proton acceptor. Positions 205 to 207 (DGG) match the DGA/G motif.

Belongs to the patatin family.

Possesses non-specific lipolytic acyl hydrolase (LAH) activity. Hydrolyzes phospholipids as well as galactolipids. May play a role in disease resistance. In Arabidopsis thaliana (Mouse-ear cress), this protein is Patatin-like protein 4 (PLP4).